A 295-amino-acid chain; its full sequence is Elongation factor Ts (295 aa).

The interval 80 to 83 (TDFV) is involved in Mg(2+) ion dislocation from EF-Tu.

The protein belongs to the EF-Ts family.

The protein localises to the cytoplasm. In terms of biological role, associates with the EF-Tu.GDP complex and induces the exchange of GDP to GTP. It remains bound to the aminoacyl-tRNA.EF-Tu.GTP complex up to the GTP hydrolysis stage on the ribosome. The chain is Elongation factor Ts from Lysinibacillus sphaericus (strain C3-41).